We begin with the raw amino-acid sequence, 364 residues long: SVP1-like protein 2 (364 aa).

2 WD repeats span residues 173–213 and 218–257; these read AHDS…KICE and YQHT…NTIR.

This sequence belongs to the WD repeat PROPPIN family.

Its subcellular location is the vacuole membrane. The protein localises to the cytoplasmic vesicle membrane. The protein resides in the preautophagosomal structure membrane. Involved in mitochondrial or peroxisomal functions and amino acid signaling pathways. This is SVP1-like protein 2 (hsv2) from Schizosaccharomyces pombe (strain 972 / ATCC 24843) (Fission yeast).